The chain runs to 268 residues: Deoxyuridine 5'-triphosphate nucleotidohydrolase (268 aa).

Residues 172 to 174 (RSS) and 263 to 264 (FG) each bind substrate.

The protein belongs to the dUTPase family. Requires Mg(2+) as cofactor.

The catalysed reaction is dUTP + H2O = dUMP + diphosphate + H(+). Functionally, involved in nucleotide metabolism: produces dUMP, the immediate precursor of thymidine nucleotides and decreases the intracellular concentration of dUTP to avoid uracil incorporation into viral DNA. This is Deoxyuridine 5'-triphosphate nucleotidohydrolase from Suid herpesvirus 1 (strain Kaplan) (SuHV-1).